The chain runs to 122 residues: Large ribosomal subunit protein uL14 (122 aa).

It belongs to the universal ribosomal protein uL14 family. As to quaternary structure, part of the 50S ribosomal subunit. Forms a cluster with proteins L3 and L19. In the 70S ribosome, L14 and L19 interact and together make contacts with the 16S rRNA in bridges B5 and B8.

Its function is as follows. Binds to 23S rRNA. Forms part of two intersubunit bridges in the 70S ribosome. In Idiomarina loihiensis (strain ATCC BAA-735 / DSM 15497 / L2-TR), this protein is Large ribosomal subunit protein uL14.